The primary structure comprises 244 residues: Tetraspanin-1 (244 aa).

A run of 4 helical transmembrane segments spans residues V11–F31, L67–L87, Y104–V124, and I198–I218.

The protein belongs to the tetraspanin (TM4SF) family.

The protein localises to the membrane. The polypeptide is Tetraspanin-1 (tsp-1) (Caenorhabditis elegans).